A 199-amino-acid chain; its full sequence is Nucleoside triphosphate pyrophosphatase (199 aa).

Aspartate 72 serves as the catalytic Proton acceptor.

It belongs to the Maf family. The cofactor is a divalent metal cation.

The protein resides in the cytoplasm. It carries out the reaction a ribonucleoside 5'-triphosphate + H2O = a ribonucleoside 5'-phosphate + diphosphate + H(+). The enzyme catalyses a 2'-deoxyribonucleoside 5'-triphosphate + H2O = a 2'-deoxyribonucleoside 5'-phosphate + diphosphate + H(+). Nucleoside triphosphate pyrophosphatase. May have a dual role in cell division arrest and in preventing the incorporation of modified nucleotides into cellular nucleic acids. This chain is Nucleoside triphosphate pyrophosphatase, found in Synechococcus elongatus (strain ATCC 33912 / PCC 7942 / FACHB-805) (Anacystis nidulans R2).